An 85-amino-acid chain; its full sequence is MNSLVMISLALLVMTGVESVRDGYIADDKNCAYFCGRNAYCDEECKKKGAESGYCQWAGQYGNACWCYKLPDKVPIKVSGKCNGR.

The first 19 residues, 1-19 (MNSLVMISLALLVMTGVES), serve as a signal peptide directing secretion. Residues 21-83 (RDGYIADDKN…VPIKVSGKCN (63 aa)) form the LCN-type CS-alpha/beta domain. Positions 27 to 31 (DDKNC) are specificity module, loop 1. 4 cysteine pairs are disulfide-bonded: C31/C82, C35/C55, C41/C65, and C45/C67. Specificity module, loop regions lie at residues 58–62 (AGQYG) and 75–83 (PIKVSGKCN). N83 is modified (asparagine amide).

Belongs to the long (4 C-C) scorpion toxin superfamily. Sodium channel inhibitor family. Alpha subfamily. Post-translationally, C-terminal amidation does not appear to play an important role in activity, since the non-amidated recombinant toxin and the native toxin (which is amidated) show similar activities on all sodium channels tested. Expressed by the venom gland.

It is found in the secreted. In terms of biological role, alpha toxins bind voltage-independently at site-3 of sodium channels (Nav) and inhibit the inactivation of the activated channels, thereby blocking neuronal transmission. This toxin inhibits inactivation of Nav1.6/SCN8A (EC(50)=3.1 uM) and drosophila DmNav1 (EC(50)=1.17 uM). It also shows a weak inhibition of inactivation on Nav1.2/SCN2A Nav1.3/SCN3A, and Nav1.7/SCN9A. The toxin (1 uM) does not significantly shift the midpoint of activation at the two channels, but induces a significant depolarizing shift in the V(1/2) of inactivation of the channels. The toxin has also been shown to dose-dependently stimulates intracellular signaling in DRG neurons through activation of two kinases (type II protein kinase A (PKA-II) and MAP kinases 1/3 (MAPK1/MAPK3)). Nav1.2/SCN2A is strongly suggested to be the target channel predominantly involved in this activation. In vivo, the toxin induces a dose-dependent thermal hyperalgesia lasting 30-45 minutes. The sequence is that of Sodium channel neurotoxin MeuNaTxalpha-1 from Mesobuthus eupeus (Lesser Asian scorpion).